Reading from the N-terminus, the 123-residue chain is uncharacterized protein (123 aa).

Residues 1 to 20 form the signal peptide; it reads MSPLIVGTLIIILLSGLATA. A lipid anchor (GPI-anchor amidated glycine) is attached at Gly-96. A propeptide spans 97 to 123 (removed in mature form); that stretch reads SSPTTKRVIYIVMILLVLITLAVNLKH.

The protein resides in the cell membrane. This is an uncharacterized protein from Schizosaccharomyces pombe (strain 972 / ATCC 24843) (Fission yeast).